The following is a 431-amino-acid chain: Methionine aminopeptidase 2-2 (431 aa).

Residues 1-76 (MAAQASEKLQ…PPRVPLSTLF (76 aa)) are disordered. The segment covering 35–47 (EAEDDSDDDEVED) has biased composition (acidic residues). Residue His184 coordinates substrate. Positions 204, 215, and 284 each coordinate a divalent metal cation. His292 is a binding site for substrate. The a divalent metal cation site is built by Glu317 and Glu412.

This sequence belongs to the peptidase M24A family. Methionine aminopeptidase eukaryotic type 2 subfamily. Requires Co(2+) as cofactor. The cofactor is Zn(2+). Mn(2+) serves as cofactor. It depends on Fe(2+) as a cofactor.

The protein resides in the cytoplasm. It catalyses the reaction Release of N-terminal amino acids, preferentially methionine, from peptides and arylamides.. In terms of biological role, cotranslationally removes the N-terminal methionine from nascent proteins. The N-terminal methionine is often cleaved when the second residue in the primary sequence is small and uncharged (Met-Ala-, Cys, Gly, Pro, Ser, Thr, or Val). This chain is Methionine aminopeptidase 2-2, found in Aspergillus niger (strain ATCC MYA-4892 / CBS 513.88 / FGSC A1513).